The primary structure comprises 156 residues: Small ribosomal subunit protein uS7 (156 aa).

This sequence belongs to the universal ribosomal protein uS7 family. In terms of assembly, part of the 30S ribosomal subunit. Contacts proteins S9 and S11.

One of the primary rRNA binding proteins, it binds directly to 16S rRNA where it nucleates assembly of the head domain of the 30S subunit. Is located at the subunit interface close to the decoding center, probably blocks exit of the E-site tRNA. This Paraburkholderia phymatum (strain DSM 17167 / CIP 108236 / LMG 21445 / STM815) (Burkholderia phymatum) protein is Small ribosomal subunit protein uS7.